Reading from the N-terminus, the 233-residue chain is MGEREEVKLLGTWYSPVVIRAKIALRLKSVDYDYVEEDLFGSKSELLLKSNPIFKKVPVLIHNTKPVCVSLNIVEYIDETWNSSGSSILPSHPYDRALARFWSVFVDDKWLPTLMAAVVAKSEEAKAKGMEEVEEGLLQLEAAFIALSKGKSFFGGETIGFIDICLGSFLVLLKAREKLKNEKILDELKTPSLYRWANQFLSNEMVKNVVPDIDKVAKFIEEFEDRAQYIRCF.

The GST N-terminal domain occupies 5-85 (EEVKLLGTWY…YIDETWNSSG (81 aa)). Glutathione contacts are provided by residues 15 to 16 (SP), 42 to 43 (SK), 56 to 57 (KV), and 69 to 70 (VS). The 128-residue stretch at 92–219 (HPYDRALARF…VPDIDKVAKF (128 aa)) folds into the GST C-terminal domain. A Phosphothreonine modification is found at threonine 158.

This sequence belongs to the GST superfamily. Tau family.

Its subcellular location is the cytoplasm. The protein resides in the cytosol. It carries out the reaction RX + glutathione = an S-substituted glutathione + a halide anion + H(+). Its function is as follows. May be involved in the conjugation of reduced glutathione to a wide number of exogenous and endogenous hydrophobic electrophiles and have a detoxification role against certain herbicides. This chain is Glutathione S-transferase U15 (GSTU15), found in Arabidopsis thaliana (Mouse-ear cress).